A 1253-amino-acid polypeptide reads, in one-letter code: Myosin heavy chain 95F (1253 aa).

Positions 3-54 (EDTQLVWVRDAAEGYIQGRITEIGAKEFEVTPTDRKYPKRTCHFDDIHSSCD) constitute a Myosin N-terminal SH3-like domain. The Myosin motor domain occupies 57–766 (QDHDDNCELM…KFVEFDRIMR (710 aa)). Residue 151 to 158 (GESGAGKT) coordinates ATP. The actin-binding stretch occupies residues 647-666 (GELMEKLEQNGTNFIRCIKP). The region spanning 808–837 (RNKCVLIAQRIARGFLARKQHRPRYQGIGK) is the IQ domain. A coiled-coil region spans residues 900–1022 (ANMNKLTVDL…LRLANESNGQ (123 aa)). The hydrophobic region stretch occupies residues 1187–1193 (PILLVAG). Residues 1233 to 1253 (AYKNLGAAKPNGPAAAMQKQQ) are disordered.

The protein belongs to the TRAFAC class myosin-kinesin ATPase superfamily. Myosin family. Isoform B is present at a higher level in the head and gonads than in the thoraxes. Isoform 145 kDa is found only in the head. CLIP-190 and jar are coexpressed at several times in development and in a number of tissues, including embryonic axonal neuron processes and posterior pole.

It is found in the cytoplasm. The protein resides in the cytoskeleton. Functionally, myosin is a protein that binds to actin and has ATPase activity that is activated by actin. Together CLIP-190 and jar may coordinate the interaction between the actin and microtubule cytoskeleton. May link endocytic vesicles to microtubules and may be involved in transport in the early embryo and in the dynamic process of dorsal closure. It is believed that its function changes during the life cycle. The chain is Myosin heavy chain 95F (jar) from Drosophila melanogaster (Fruit fly).